A 123-amino-acid chain; its full sequence is Large ribosomal subunit protein uL14 (123 aa).

This sequence belongs to the universal ribosomal protein uL14 family. Part of the 50S ribosomal subunit. Forms a cluster with proteins L3 and L19. In the 70S ribosome, L14 and L19 interact and together make contacts with the 16S rRNA in bridges B5 and B8.

In terms of biological role, binds to 23S rRNA. Forms part of two intersubunit bridges in the 70S ribosome. This is Large ribosomal subunit protein uL14 from Blochmanniella floridana.